Consider the following 318-residue polypeptide: MSLNFLDFEQPIAELEAQIEELKSVGNRGQLDLNLEEEVQRLTTKSQELTEKIFSDLGAWQVAQLARHPLRPYTLDYIRMIFTEFDEMAGDRSFANDEAIVGGIARLDGTPVMVIGQQKGRETKEKIRRNFGMPKPEGYRKALRLMQTAERFKMPIVTFIDTPGAYPGIGAEERGQSEAIARNLKVMARLTVPIVCTVIGEGGSGGALAIGVGDRVNMLQYSTYSVISPEGCASILWKSASKAPLAAEAMGVTAERSKELGLVDSVIPEPLGGAHRHQEEMAVRLKRQLIADLGSLQGLSHEELLDQRYRKLMSFGYC.

The CoA carboxyltransferase C-terminal domain maps to 41–295 (RLTTKSQELT…KRQLIADLGS (255 aa)).

It belongs to the AccA family. In terms of assembly, acetyl-CoA carboxylase is a heterohexamer composed of biotin carboxyl carrier protein (AccB), biotin carboxylase (AccC) and two subunits each of ACCase subunit alpha (AccA) and ACCase subunit beta (AccD).

The protein resides in the cytoplasm. It carries out the reaction N(6)-carboxybiotinyl-L-lysyl-[protein] + acetyl-CoA = N(6)-biotinyl-L-lysyl-[protein] + malonyl-CoA. It functions in the pathway lipid metabolism; malonyl-CoA biosynthesis; malonyl-CoA from acetyl-CoA: step 1/1. Its function is as follows. Component of the acetyl coenzyme A carboxylase (ACC) complex. First, biotin carboxylase catalyzes the carboxylation of biotin on its carrier protein (BCCP) and then the CO(2) group is transferred by the carboxyltransferase to acetyl-CoA to form malonyl-CoA. The chain is Acetyl-coenzyme A carboxylase carboxyl transferase subunit alpha from Idiomarina loihiensis (strain ATCC BAA-735 / DSM 15497 / L2-TR).